A 491-amino-acid chain; its full sequence is MSLTAPLRAGQMNFYDEPYNPVLNLHIQPSVKDENQRSTWPIIDTSNTSTQIARAHFEKHPPNNLRKSNFFHFVIALYDRNSQPIEVERTQFAGFVEKEKEVDGQDTRNGIHYRLSLMFQNGIRSEHDLFVRLIDSSTKQAITYEGQDKNPEMCRVLLTHEVMCSRCCEKKSCGNRNETPSDPVIIDRFFLKFFLKCNQNCLKNAGNPRDMRRFQVVLCSSARIDGPLLAVSDNMFVHNNSKHGRRTKRTDASDDSEYSESAELPSSVPVIKALFPSEGWIQGGTQVVLIGENFFEGLQVAFGTASPNWGESVQLISPHAIRVTTPPKHSAGPVDVTLQYKSKTYSRGTPLRFSYITLAEPGIEYGFQRLQKLLPKYPGDPERLPKDQILKRAAELAEALYNRTSTESLSSYYHTQFDATSDYAARTHTSPRSTLPYGAGPPALSSAVYQTSYPTVNATPAANFLNTQTGFATFGAVNPFAATLQSSSRLS.

Residues 66–69 (RKSN) are interaction with DNA. The C5-type zinc finger occupies 154–173 (CRVLLTHEVMCSRCCEKKSC). 2 interaction with DNA regions span residues 200 to 207 (NCLKNAGN) and 239 to 242 (NNSK). A disordered region spans residues 240–261 (NSKHGRRTKRTDASDDSEYSES). The IPT/TIG domain maps to 269–355 (PVIKALFPSE…SRGTPLRFSY (87 aa)).

The protein belongs to the COE family. In terms of assembly, may homodimerise. Interacts with jmjd-3.1. May interact with GFI1 homolog pag-3.

The protein resides in the nucleus. In terms of biological role, transcription factor. Involved in motor neuron fate determination and maintenance, acting as an activator of gene expression in a subset of motor neurons. May act in concert with GFI1 homolog pag-3 in motor neuron fate determination. Required to maintain the expression of transcriptional repressors bnc-1 and cfi-1, which play roles in the cell fate of motor neurons. May play a role in the expression of proteins essential for axonal pathfinding and/or neuronal differentiation in both sensory and motor neurons. Cooperates with jmjd-3.1 and wdr-5.1 to ensure robust transdifferentiation of the Y rectal cell to the PDA motor neuron during larval development. In Caenorhabditis elegans, this protein is Transcription factor unc-3 (unc-3).